Reading from the N-terminus, the 333-residue chain is MIETLLQSPSSWTNFFIFFGLAVLLLFAVLGFVTYGILAERKVMGFMQGRIGPNQVGGRFGLLQTVADVLKLLLKEDSIPKAADKPLFILAPVIAFAPAFMVLAVIPFTDKFQFADIGVGLLYYIAVSGITTIGVVTGGWASNNKYSLLGGMRAAAQMISYEIPLVMSVIGVVLLAGSLNLNEIVAAQEKVWYIFAQPIGFVIFLIAAVAELNRTPFDLPEAESELVSGYHTEYSGFRWAFFMLSEYVYFFGMSSLITVLFLGGWNPVMFLGFIPGAVWFALKFSSVVFLLIWFRVTFPRIRGDQLMEFGWKILLPIALANIFLTALIKELFF.

A run of 8 helical transmembrane segments spans residues 15–35 (FFIF…FVTY), 88–108 (FILA…VIPF), 117–137 (IGVG…GVVT), 159–179 (ISYE…AGSL), 191–211 (VWYI…AVAE), 239–259 (WAFF…LITV), 272–294 (GFIP…LIWF), and 313–333 (ILLP…ELFF).

This sequence belongs to the complex I subunit 1 family. As to quaternary structure, NDH-1 is composed of 14 different subunits. Subunits NuoA, H, J, K, L, M, N constitute the membrane sector of the complex.

Its subcellular location is the cell membrane. The enzyme catalyses a quinone + NADH + 5 H(+)(in) = a quinol + NAD(+) + 4 H(+)(out). In terms of biological role, NDH-1 shuttles electrons from NADH, via FMN and iron-sulfur (Fe-S) centers, to quinones in the respiratory chain. The immediate electron acceptor for the enzyme in this species is believed to be ubiquinone. Couples the redox reaction to proton translocation (for every two electrons transferred, four hydrogen ions are translocated across the cytoplasmic membrane), and thus conserves the redox energy in a proton gradient. This subunit may bind ubiquinone. The protein is NADH-quinone oxidoreductase subunit H of Bacillus mycoides (strain KBAB4) (Bacillus weihenstephanensis).